The following is a 247-amino-acid chain: Protein SODIUM POTASSIUM ROOT DEFECTIVE 3 (247 aa).

Residues 130 to 166 (GSTGQDTVATEESEASAPKRGSSGPVEEKKKSSGSGS) are disordered. The 69-residue stretch at 167-235 (DQVVVLRVSL…KVKNAQFWTP (69 aa)) folds into the HMA domain. A metal cation is bound by residues cysteine 180 and cysteine 183.

The protein resides in the cytoplasm. In terms of biological role, heavy metal-associated protein involved in salt tolerance. The sequence is that of Protein SODIUM POTASSIUM ROOT DEFECTIVE 3 from Arabidopsis thaliana (Mouse-ear cress).